A 293-amino-acid chain; its full sequence is Methylsterol monooxygenase 1 (293 aa).

Transmembrane regions (helical) follow at residues 55–75 (LIVH…FQFI) and 100–120 (VLLF…YYFT). The region spanning 145–274 (CAVIEDTWHY…FTWWDRIFGT (130 aa)) is the Fatty acid hydroxylase domain. The Histidine box-1 motif lies at 157-161 (HRLLH). A Histidine box-2 motif is present at residues 170–174 (HKVHH). The chain crosses the membrane as a helical span at residues 199 to 219 (FFIGIVLLCDHVILLWAWVTI). Residues 249–255 (HHDFHHM) carry the Histidine box-3 motif.

The protein belongs to the sterol desaturase family. Fe cation is required as a cofactor. Post-translationally, ubiquitinated by MARCHF6, leading to proteasomal degradation.

It localises to the endoplasmic reticulum membrane. It catalyses the reaction 4,4-dimethyl-5alpha-cholest-7-en-3beta-ol + 6 Fe(II)-[cytochrome b5] + 3 O2 + 5 H(+) = 4alpha-carboxy-4beta-methyl-5alpha-cholest-7-ene-3beta-ol + 6 Fe(III)-[cytochrome b5] + 4 H2O. The catalysed reaction is 4,4-dimethyl-5alpha-cholesta-8,24-dien-3beta-ol + 6 Fe(II)-[cytochrome b5] + 3 O2 + 5 H(+) = 4beta-methylzymosterol-4alpha-carboxylate + 6 Fe(III)-[cytochrome b5] + 4 H2O. The enzyme catalyses 4alpha-methylzymosterol + 6 Fe(II)-[cytochrome b5] + 3 O2 + 5 H(+) = 4alpha-carboxyzymosterol + 6 Fe(III)-[cytochrome b5] + 4 H2O. It carries out the reaction 4alpha-methyl-5alpha-cholest-7-en-3beta-ol + 6 Fe(II)-[cytochrome b5] + 3 O2 + 5 H(+) = 4alpha-carboxy-5alpha-cholest-7-en-3beta-ol + 6 Fe(III)-[cytochrome b5] + 4 H2O. It catalyses the reaction 4,4-dimethyl-5alpha-cholest-8-en-3beta-ol + 6 Fe(II)-[cytochrome b5] + 3 O2 + 5 H(+) = 4alpha-carboxy-4beta-methyl-5alpha-cholest-8-en-3beta-ol + 6 Fe(III)-[cytochrome b5] + 4 H2O. The catalysed reaction is 4alpha-methyl-5alpha-cholest-8-en-3beta-ol + 6 Fe(II)-[cytochrome b5] + 3 O2 + 5 H(+) = 4alpha-carboxy-5alpha-cholest-8-ene-3beta-ol + 6 Fe(III)-[cytochrome b5] + 4 H2O. Its pathway is steroid biosynthesis; zymosterol biosynthesis; zymosterol from lanosterol: step 3/6. It participates in steroid biosynthesis; cholesterol biosynthesis. Functionally, catalyzes the three-step monooxygenation required for the demethylation of 4,4-dimethyl and 4alpha-methylsterols, which can be subsequently metabolized to cholesterol. The polypeptide is Methylsterol monooxygenase 1 (MSMO1) (Macaca fascicularis (Crab-eating macaque)).